The primary structure comprises 297 residues: Tyrosine recombinase XerD (297 aa).

The 86-residue stretch at 1 to 86 folds into the Core-binding (CB) domain; sequence MNDLIDDFLH…SLRSFFHYLM (86 aa). The 185-residue stretch at 107–291 folds into the Tyr recombinase domain; that stretch reads SLPKVLNLDD…TKLRLKDVYK (185 aa). Active-site residues include R147, K171, H243, R246, and H269. The active-site O-(3'-phospho-DNA)-tyrosine intermediate is the Y278.

This sequence belongs to the 'phage' integrase family. XerD subfamily. As to quaternary structure, forms a cyclic heterotetrameric complex composed of two molecules of XerC and two molecules of XerD.

Its subcellular location is the cytoplasm. Site-specific tyrosine recombinase, which acts by catalyzing the cutting and rejoining of the recombining DNA molecules. The XerC-XerD complex is essential to convert dimers of the bacterial chromosome into monomers to permit their segregation at cell division. It also contributes to the segregational stability of plasmids. In Listeria innocua serovar 6a (strain ATCC BAA-680 / CLIP 11262), this protein is Tyrosine recombinase XerD.